A 473-amino-acid polypeptide reads, in one-letter code: Fumarate hydratase class II (473 aa).

Substrate-binding positions include 104-106, 128-131, 138-140, and threonine 186; these read SGT, HPND, and SSN. Histidine 187 acts as the Proton donor/acceptor in catalysis. The active site involves serine 318. Residues serine 319 and 324 to 326 each bind substrate; that span reads KVN.

The protein belongs to the class-II fumarase/aspartase family. Fumarase subfamily. As to quaternary structure, homotetramer.

The protein localises to the cytoplasm. It carries out the reaction (S)-malate = fumarate + H2O. It functions in the pathway carbohydrate metabolism; tricarboxylic acid cycle; (S)-malate from fumarate: step 1/1. Functionally, involved in the TCA cycle. Catalyzes the stereospecific interconversion of fumarate to L-malate. This chain is Fumarate hydratase class II, found in Corynebacterium efficiens (strain DSM 44549 / YS-314 / AJ 12310 / JCM 11189 / NBRC 100395).